The primary structure comprises 258 residues: Small ribosomal subunit protein mS23 (258 aa).

Belongs to the mitochondrion-specific ribosomal protein mS23 family. Component of the mitochondrial small ribosomal subunit.

Its subcellular location is the mitochondrion. This is Small ribosomal subunit protein mS23 (rsm25) from Aspergillus fumigatus (strain ATCC MYA-4609 / CBS 101355 / FGSC A1100 / Af293) (Neosartorya fumigata).